The following is a 383-amino-acid chain: MRRAINLINRNPRPYDIAADQSSLLFSSLPYDVVLNCLARVSRRYYPNLSCVSKSFQSLVRSPELAHMRSLIGKDDPVVYVCFSDTKPFLGRRLDWFTLNPNEKKTSVLNSFQVFSYYMLYCPSVSIGSKIYFVGGCMYKCLPGLLIFDSWSGELCVGPSMKEARMLPGVAVVNGKLYVMGGCREDQIQVEVFDPNSQTWEVGPLSSDGEVRYGKGLMRYGAIVTEAVALEGKVYCMSYKDGSHIIYDTKDGKCETFLMADGKAWRRGGVCVVNSVIYVYYINLGVMWYDPKDKVWREVKGLNKLDYKSIDMVGMVDCNGKLGFLWGNNTREIISGRTEKRIWCEMIVLERSGVEIHGTVEWSDLVGFVPHDYEIWRCLGVSY.

Positions 23 to 71 (SLLFSSLPYDVVLNCLARVSRRYYPNLSCVSKSFQSLVRSPELAHMRSL) constitute an F-box domain. Kelch repeat units follow at residues 130–175 (KIYF…VVNG), 176–220 (KLYV…LMRY), and 269–317 (GVCV…GMVD).

This Arabidopsis thaliana (Mouse-ear cress) protein is F-box/kelch-repeat protein At2g22030.